Consider the following 158-residue polypeptide: NAD(P)H-quinone oxidoreductase subunit N (158 aa).

Belongs to the complex I NdhN subunit family. In terms of assembly, NDH-1 can be composed of about 15 different subunits; different subcomplexes with different compositions have been identified which probably have different functions.

The protein resides in the cellular thylakoid membrane. The enzyme catalyses a plastoquinone + NADH + (n+1) H(+)(in) = a plastoquinol + NAD(+) + n H(+)(out). The catalysed reaction is a plastoquinone + NADPH + (n+1) H(+)(in) = a plastoquinol + NADP(+) + n H(+)(out). In terms of biological role, NDH-1 shuttles electrons from an unknown electron donor, via FMN and iron-sulfur (Fe-S) centers, to quinones in the respiratory and/or the photosynthetic chain. The immediate electron acceptor for the enzyme in this species is believed to be plastoquinone. Couples the redox reaction to proton translocation, and thus conserves the redox energy in a proton gradient. Cyanobacterial NDH-1 also plays a role in inorganic carbon-concentration. The sequence is that of NAD(P)H-quinone oxidoreductase subunit N from Cyanothece sp. (strain PCC 7425 / ATCC 29141).